The following is a 224-amino-acid chain: Probable C-&gt;U-editing enzyme APOBEC-2 (224 aa).

Positions 1–25 (MAQKEEAAAATEAASQNGEDLENLD) are disordered. Zn(2+) contacts are provided by E60 and H98. The region spanning 64 to 169 (GRNKTFLCYV…LEIQDALKKL (106 aa)) is the CMP/dCMP-type deaminase domain. The active-site Proton donor is the E100. Zn(2+) contacts are provided by C128 and C131.

This sequence belongs to the cytidine and deoxycytidylate deaminase family. Homotetramer. Zn(2+) is required as a cofactor.

The enzyme catalyses cytidine(6666) in apoB mRNA + H2O + H(+) = uridine(6666) in apoB mRNA + NH4(+). Functionally, probable C to U editing enzyme whose physiological substrate is not yet known. Does not display detectable apoB mRNA editing. Has a low intrinsic cytidine deaminase activity. May play a role in the epigenetic regulation of gene expression through the process of active DNA demethylation. The sequence is that of Probable C-&gt;U-editing enzyme APOBEC-2 (APOBEC2) from Pongo pygmaeus (Bornean orangutan).